Consider the following 210-residue polypeptide: MNLQRQAEIHRVTNETEVSVRLGLDGSGRCKVSSGIAFLDHMLHQLSSHGLLDLELVAKGDTHIDDHHTNEDVGIALGQALSKALGNRKGIYRFGQFTAPLDEALVQVILDCSGRPHINYELEIPTQKIGTYDTELVREFFVALANNSGLTLHIRQLNGSNSHHIVEACFKAFAKSLRMAIEADPRRGGSIPSSKGVLEQAGDNNTEKSK.

The segment at 185–210 is disordered; it reads PRRGGSIPSSKGVLEQAGDNNTEKSK.

This sequence belongs to the imidazoleglycerol-phosphate dehydratase family.

The protein localises to the cytoplasm. It catalyses the reaction D-erythro-1-(imidazol-4-yl)glycerol 3-phosphate = 3-(imidazol-4-yl)-2-oxopropyl phosphate + H2O. Its pathway is amino-acid biosynthesis; L-histidine biosynthesis; L-histidine from 5-phospho-alpha-D-ribose 1-diphosphate: step 6/9. In Prochlorococcus marinus (strain SARG / CCMP1375 / SS120), this protein is Imidazoleglycerol-phosphate dehydratase.